Reading from the N-terminus, the 520-residue chain is Catalase easC (520 aa).

H71 is an active-site residue. Y361 contacts heme.

This sequence belongs to the catalase family. It depends on heme as a cofactor.

The protein operates within alkaloid biosynthesis; ergot alkaloid biosynthesis. Its function is as follows. Catalase; part of the gene cluster that mediates the biosynthesis of fumiclavanine C, a fungal ergot alkaloid. DmaW catalyzes the first step of ergot alkaloid biosynthesis by condensing dimethylallyl diphosphate (DMAP) and tryptophan to form 4-dimethylallyl-L-tryptophan. The second step is catalyzed by the methyltransferase easF that methylates 4-dimethylallyl-L-tryptophan in the presence of S-adenosyl-L-methionine, resulting in the formation of 4-dimethylallyl-L-abrine. The catalase easC and the FAD-dependent oxidoreductase easE then transform 4-dimethylallyl-L-abrine to chanoclavine-I which is further oxidized by EasD in the presence of NAD(+), resulting in the formation of chanoclavine-I aldehyde. EasA reduces chanoclavine-I aldehyde to dihydrochanoclavine-I aldehyde that spontaneously dehydrates to form 6,8-dimethyl-6,7-didehydroergoline. EasG then catalyzes the reduction of 6,8-dimethyl-6,7-didehydroergoline to form festuclavine. Hydrolysis of festuclavine by easM then leads to the formation of fumigaclavine B which is in turn acetylated by easN to fumigaclavine A. Finally, easL catalyzes the conversion of fumigaclavine A into fumigaclavine C by attaching a dimethylallyl moiety to C-2 of the indole nucleus. This is Catalase easC from Aspergillus fumigatus (strain ATCC MYA-4609 / CBS 101355 / FGSC A1100 / Af293) (Neosartorya fumigata).